We begin with the raw amino-acid sequence, 249 residues long: Caffeoyl-CoA O-methyltransferase (249 aa).

K21 is a binding site for substrate. S-adenosyl-L-methionine is bound by residues T63, E85, 87–88 (GV), S93, D111, and A140. D162 is a binding site for substrate. D162 lines the a divalent metal cation pocket. An S-adenosyl-L-methionine-binding site is contributed by D164. Residues D188 and N189 each contribute to the a divalent metal cation site. N193 provides a ligand contact to substrate.

It belongs to the class I-like SAM-binding methyltransferase superfamily. Cation-dependent O-methyltransferase family. CCoAMT subfamily. In terms of assembly, homodimer. It depends on a divalent metal cation as a cofactor.

It carries out the reaction (E)-caffeoyl-CoA + S-adenosyl-L-methionine = (E)-feruloyl-CoA + S-adenosyl-L-homocysteine + H(+). It functions in the pathway aromatic compound metabolism; phenylpropanoid biosynthesis. Its function is as follows. Methylates caffeoyl-CoA to feruloyl-CoA and 5-hydroxyferuloyl-CoA to sinapoyl-CoA. Plays a role in the synthesis of feruloylated polysaccharides. Involved in the reinforcement of the plant cell wall. Also involved in the responding to wounding or pathogen challenge by the increased formation of cell wall-bound ferulic acid polymers. The sequence is that of Caffeoyl-CoA O-methyltransferase from Eucalyptus gunnii (Cider gum).